Reading from the N-terminus, the 569-residue chain is Potassium-transporting ATPase potassium-binding subunit (569 aa).

A run of 10 helical transmembrane segments spans residues 5–25 (GWAEIALTLGLAVAIGWPLGV), 65–85 (GYAGALLAFNFVGFLLVYAVL), 135–155 (LVLTVQNFLSAATGATVAAAL), 179–199 (LYVLLPLSFVVAIVLVALGLP), 254–274 (LTNLITAVSINVLGWAAFFAF), 286–306 (ALVIAASILLSAGAATVYWTE), 383–403 (GIAVMIVMAVLAVFVAGLMVG), 422–442 (LLTVLAIPVATLGFSAIAAVL), 489–509 (MGVAMAMGRFMPIVAVLAMAG), and 528–548 (GGLFVGLLIGVILILGGLQFF).

This sequence belongs to the KdpA family. The system is composed of three essential subunits: KdpA, KdpB and KdpC.

Its subcellular location is the cell inner membrane. Its function is as follows. Part of the high-affinity ATP-driven potassium transport (or Kdp) system, which catalyzes the hydrolysis of ATP coupled with the electrogenic transport of potassium into the cytoplasm. This subunit binds the periplasmic potassium ions and delivers the ions to the membrane domain of KdpB through an intramembrane tunnel. In Caulobacter sp. (strain K31), this protein is Potassium-transporting ATPase potassium-binding subunit.